The following is a 118-amino-acid chain: Basic phospholipase A2 PA-10A (118 aa).

7 cysteine pairs are disulfide-bonded: C11-C71, C27-C117, C29-C45, C44-C98, C51-C91, C60-C84, and C78-C89. Ca(2+) contacts are provided by Y28, G30, and G32. Residue H48 is part of the active site. D49 contacts Ca(2+). Residue D92 is part of the active site.

This sequence belongs to the phospholipase A2 family. Group I subfamily. D49 sub-subfamily. Requires Ca(2+) as cofactor. Expressed by the venom gland.

The protein localises to the secreted. The catalysed reaction is a 1,2-diacyl-sn-glycero-3-phosphocholine + H2O = a 1-acyl-sn-glycero-3-phosphocholine + a fatty acid + H(+). In terms of biological role, PLA2 catalyzes the calcium-dependent hydrolysis of the 2-acyl groups in 3-sn-phosphoglycerides. This is Basic phospholipase A2 PA-10A from Pseudechis australis (Mulga snake).